We begin with the raw amino-acid sequence, 376 residues long: Transcription initiation factor IIA subunit 1 (376 aa).

At alanine 2 the chain carries N-acetylalanine. Composition is skewed to low complexity over residues 69–79 and 89–105; these read QVQQQHQPQQQ and QAQP…TQQV. Disordered stretches follow at residues 69 to 107, 246 to 265, and 274 to 329; these read QVQQ…QVLI, AQAQ…PAQT, and DGTG…QELF. Phosphoserine; by TAF1 occurs at positions 280, 281, 316, and 321. Positions 280 to 329 are enriched in acidic residues; it reads SSEEDEDEEEDYDDDEEEDKEKDGAEDGQVEEEPLNSEDDVSDEEGQELF. Histidine 343 and arginine 344 together coordinate DNA.

It belongs to the TFIIA subunit 1 family. In terms of assembly, TFIIA is a heterodimer of the large unprocessed subunit 1 and a small subunit gamma. It was originally believed to be a heterotrimer of an alpha (p35), a beta (p19) and a gamma subunit (p12). TFIIA forms a complex with TBP. Part of TBP-based Pol II pre-initiation complex (PIC), in which Pol II core assembles with general transcription factors and other specific initiation factors including GTF2E1, GTF2E2, GTF2F1, GTF2F2, TCEA1, ERCC2, ERCC3, GTF2H2, GTF2H3, GTF2H4, GTF2H5, GTF2A1, GTF2A2, GTF2B and TBP; this large multi-subunit PIC complex mediates DNA unwinding and targets Pol II core to the transcription start site where the first phosphodiester bond forms. In terms of processing, the alpha and beta subunits are postranslationally produced from the precursor formby TASP1. The cleavage promotes proteasomal degradation.

The protein resides in the nucleus. In terms of biological role, TFIIA is a component of the transcription machinery of RNA polymerase II and plays an important role in transcriptional activation. TFIIA in a complex with TBP mediates transcriptional activity. This is Transcription initiation factor IIA subunit 1 (GTF2A1) from Pongo abelii (Sumatran orangutan).